Consider the following 228-residue polypeptide: Eukaryotic translation initiation factor 4E-1 (228 aa).

2 EIF4G-binding regions span residues 53–56 and 63–99; these read HLLE and FDTP…NNIH. Residues 71-76, Lys-103, and 121-122 each bind mRNA; these read KQDDWG and WE. Cys-126 and Cys-164 are oxidised to a cystine. Residues 147 to 156 form an EIF4G-binding region; sequence YTLLAMIGEQ. Residues 171-176 and 216-220 each bind mRNA; these read RGRAEK and RKLDR.

It belongs to the eukaryotic initiation factor 4E family. In terms of assembly, EIF4F is a multi-subunit complex, the composition of which varies with external and internal environmental conditions. It is composed of at least EIF4A, EIF4E and EIF4G. EIF4E is also known to interact with other partners. In higher plants two isoforms of EIF4F have been identified, named isoform EIF4F and isoform EIF(iso)4F. Isoform EIF4F has subunits p220 and p26, whereas isoform EIF(iso)4F has subunits p82 and p28. (Microbial infection) Interacts with potyvirus viral genome-linked protein (VPg); this interaction is possible in susceptible hosts but impaired in resistant plants. According to the redox status, the Cys-126-Cys-164 disulfide bridge may have a role in regulating protein function by affecting its ability to bind capped mRNA.

Its subcellular location is the nucleus. It localises to the cytoplasm. Functionally, component of the protein complex eIF4F, which is involved in the recognition of the mRNA cap, ATP-dependent unwinding of 5'-terminal secondary structure and recruitment of mRNA to the ribosome. Recognizes and binds the 7-methylguanosine-containing mRNA cap during an early step in the initiation of protein synthesis and facilitates ribosome binding by inducing the unwinding of the mRNAs secondary structures. Key component of recessive resistance to potyviruses. Its function is as follows. (Microbial infection) Susceptibility host factor required for viral infection by recruiting viral RNAs to the host ribosomal complex via an interaction with viral genome-linked protein (VPg). Also seems to be involved in virus movement from cell-to-cell. In Pisum sativum (Garden pea), this protein is Eukaryotic translation initiation factor 4E-1.